A 115-amino-acid polypeptide reads, in one-letter code: MVKSTSKDAQDLFHSLHSAYTATPTNLKIIDLYVCFAVFTALIQVAYMALVGSFPFNSFLSGVLSCIGTAVLAVCLRIQVNKENKEFKDLAPERAFADFVLCNLVLHLVIINFLG.

The Cytoplasmic portion of the chain corresponds to 1–31 (MVKSTSKDAQDLFHSLHSAYTATPTNLKIID). A helical membrane pass occupies residues 32–52 (LYVCFAVFTALIQVAYMALVG). The Lumenal portion of the chain corresponds to 53 to 55 (SFP). Residues 56 to 76 (FNSFLSGVLSCIGTAVLAVCL) traverse the membrane as a helical segment. Residues 77–94 (RIQVNKENKEFKDLAPER) are Cytoplasmic-facing. A helical transmembrane segment spans residues 95 to 115 (AFADFVLCNLVLHLVIINFLG).

The protein belongs to the DAD/OST2 family. Component of the oligosaccharyltransferase (OST) complex.

Its subcellular location is the endoplasmic reticulum membrane. The protein operates within protein modification; protein glycosylation. Functionally, subunit of the oligosaccharyl transferase (OST) complex that catalyzes the initial transfer of a defined glycan (Glc(3)Man(9)GlcNAc(2) in eukaryotes) from the lipid carrier dolichol-pyrophosphate to an asparagine residue within an Asn-X-Ser/Thr consensus motif in nascent polypeptide chains, the first step in protein N-glycosylation. N-glycosylation occurs cotranslationally and the complex associates with the Sec61 complex at the channel-forming translocon complex that mediates protein translocation across the endoplasmic reticulum (ER). All subunits are required for a maximal enzyme activity. The sequence is that of Dolichyl-diphosphooligosaccharide--protein glycosyltransferase subunit DAD2 (DAD2) from Arabidopsis thaliana (Mouse-ear cress).